We begin with the raw amino-acid sequence, 307 residues long: Glutaminase (307 aa).

Residues S66, N116, E160, N167, Y191, Y243, and V261 each coordinate substrate.

This sequence belongs to the glutaminase family. Homotetramer.

It catalyses the reaction L-glutamine + H2O = L-glutamate + NH4(+). The polypeptide is Glutaminase (Pseudoalteromonas translucida (strain TAC 125)).